The primary structure comprises 380 residues: MSTTVGQVIRCKAAVAWEAGKPLVMEEVDVAPPQKMEVRLKILYTSLCHTDVYFWEAKGQNPVFPRILGHEAAGIVESVGEGVTDLAPGDHVLPVFTGECKDCAHCKSEESNMCSLLRINTDRGVMLNDGKSRFSINGNPIYHFVGTSTFSEYTVVHVGCVAKINPLAPLDKVCVLSCGISTGLGASLNVAKPTKGSSVAIFGLGAVGLAAAEGARIAGASRIIGVDLNASRFEQAKKFGVTEFVNPKDYSKPVQEVIAEMTDGGVDRSVECTGHIDAMISAFECVHDGWGVAVLVGVPHKEAVFKTHPLNFLNERTLKGTFFGNYKPRSDIPCVVEKYMNKELELEKFITHTLPFAEINKAFDLMLKGEGLRCIITMAD.

Residues Cys48, Thr50, His70, Cys100, Cys103, Cys106, Cys114, and Cys178 each contribute to the Zn(2+) site. 2 residues coordinate an alcohol: Thr50 and His70. Thr50 contacts NAD(+). NAD(+) contacts are provided by residues 203 to 208 (GLGAVG), Asp227, Arg232, Thr273, Val296, 296 to 298 (VGV), Phe323, and Arg373.

This sequence belongs to the zinc-containing alcohol dehydrogenase family. Homodimer. Homotetramer. The cofactor is Zn(2+).

Its subcellular location is the cytoplasm. It carries out the reaction a primary alcohol + NAD(+) = an aldehyde + NADH + H(+). The enzyme catalyses a secondary alcohol + NAD(+) = a ketone + NADH + H(+). This Solanum lycopersicum (Tomato) protein is Alcohol dehydrogenase 2 (ADH2).